A 274-amino-acid chain; its full sequence is Bis(5'-nucleosyl)-tetraphosphatase, symmetrical (274 aa).

Belongs to the Ap4A hydrolase family.

It catalyses the reaction P(1),P(4)-bis(5'-adenosyl) tetraphosphate + H2O = 2 ADP + 2 H(+). In terms of biological role, hydrolyzes diadenosine 5',5'''-P1,P4-tetraphosphate to yield ADP. The chain is Bis(5'-nucleosyl)-tetraphosphatase, symmetrical from Shewanella baltica (strain OS195).